Here is a 337-residue protein sequence, read N- to C-terminus: MTDVLIAYGIPLAIIAAQSLALIVALLLVTAYVLLADRKIWAAVQLRRGPNVVGAFGLLQSFADLLKFVFKEIVIPAGANKGIFLLAPLVTVVLALSGWAVIPLDARMVIADINVGILYIFAISSLGVYGVIMAGWASNSKYPFLSALRAAAQMVSYEVSIGFVIVCVLMTAGSLNLTAIVESQRTIWYFIPHLPMFVIFFISALAETNRPPFDLAEAESELVAGFMVEYSSTAYMMFMLGEYVSILLMCAMTTILFLGGWLPPIDIAPFNMVPGVIWFLLKVFLVFFMFAMVKAFVPRYRYDQLMRLGWKVFLPISLFWVVLTAGVLVGFDIVPQH.

A run of 9 helical transmembrane segments spans residues 9–29, 50–70, 82–102, 115–135, 161–181, 186–206, 245–265, 273–293, and 313–333; these read GIPL…LLLV, PNVV…KFVF, GIFL…WAVI, VGIL…IMAG, IGFV…TAIV, TIWY…SALA, SILL…LPPI, VPGV…FAMV, and FLPI…GFDI.

Belongs to the complex I subunit 1 family. In terms of assembly, NDH-1 is composed of 14 different subunits. Subunits NuoA, H, J, K, L, M, N constitute the membrane sector of the complex.

It is found in the cell inner membrane. The enzyme catalyses a quinone + NADH + 5 H(+)(in) = a quinol + NAD(+) + 4 H(+)(out). NDH-1 shuttles electrons from NADH, via FMN and iron-sulfur (Fe-S) centers, to quinones in the respiratory chain. The immediate electron acceptor for the enzyme in this species is believed to be ubiquinone. Couples the redox reaction to proton translocation (for every two electrons transferred, four hydrogen ions are translocated across the cytoplasmic membrane), and thus conserves the redox energy in a proton gradient. This subunit may bind ubiquinone. This chain is NADH-quinone oxidoreductase subunit H, found in Parvibaculum lavamentivorans (strain DS-1 / DSM 13023 / NCIMB 13966).